A 140-amino-acid chain; its full sequence is MPWEEIEHTADAAFRVWADTPEDLLVEAAKALFDLITDLDAVEPEEEVEIEAEGGDLVELLHDWLEEIHFRHEIDGMLFSDFEVKELKKEEGWKVRGVARGEPYDPDRHPFHTEVKAVTYHNMKVEREDGRWVAEYVVDL.

The Ca(2+) site is built by aspartate 11, aspartate 139, and leucine 140.

Belongs to the archease family.

Its function is as follows. Activates the tRNA-splicing ligase complex by facilitating the enzymatic turnover of catalytic subunit RtcB. Acts by promoting the guanylylation of RtcB, a key intermediate step in tRNA ligation. Can also alter the NTP specificity of RtcB such that ATP, dGTP or ITP is used efficiently. The polypeptide is Protein archease (Methanopyrus kandleri (strain AV19 / DSM 6324 / JCM 9639 / NBRC 100938)).